The primary structure comprises 695 residues: IQ domain-containing protein E (695 aa).

Residues 29–55 (KAKRKAFHKPPPTSPKSPYLSKPRKVA) are disordered. 3 coiled-coil regions span residues 157–264 (LHVQ…RLQT), 292–358 (SALL…SSKS), and 387–477 (NKDH…CPEV). S322 is modified (phosphoserine). 4 disordered regions span residues 357–390 (KSHA…NKDH), 465–521 (EMKK…RRDA), 564–599 (ASKA…TGSP), and 618–695 (RARH…NFPV). Basic and acidic residues predominate over residues 465-482 (EMKKEEKEDCPEVPHKAQ). 2 IQ domains span residues 542–571 (LDEA…HGSE) and 601–630 (QEEA…RTTT).

In terms of assembly, component of the EvC complex composed of EFCAB7, IQCE, EVC2 and EVC; built from two subcomplexes, EVC2:EVC and EFCAB7:IQCE. Interacts (via N-terminus) with EFCAB7 (via EF-hands 1 and 2); this interaction anchors the EVC-EVC2 complex in a signaling microdomain at the base of cilia and stimulates the Hedgehog (Hh) pathway. Interacts with EVC2 (via N-terminal end). Interacts with EVC.

Its subcellular location is the cell projection. The protein resides in the cilium membrane. Functionally, component of the EvC complex that positively regulates ciliary Hedgehog (Hh) signaling. Required for proper limb morphogenesis. The polypeptide is IQ domain-containing protein E (IQCE) (Homo sapiens (Human)).